Here is a 955-residue protein sequence, read N- to C-terminus: Eukaryotic translation initiation factor 3 subunit C (955 aa).

Disordered regions lie at residues 1-22 (MSRF…SEPV) and 157-299 (RAAP…EEGW). The segment covering 162–183 (DFAEEEEDDEREDEKGSDEEEE) has biased composition (acidic residues). Residues 206-218 (VKPVADSDSSDWG) are compositionally biased toward low complexity. Residues 219–229 (SDSDSDSTSSD) are compositionally biased toward acidic residues. Residues 230–250 (EDAKYTSIRDRFLKKPEKGTE) are compositionally biased toward basic and acidic residues. Positions 288 to 297 (MFDENEEEEE) are enriched in acidic residues. Residues 658 to 834 (FHMHINLELL…ETIVMHRSEP (177 aa)) enclose the PCI domain. The tract at residues 865 to 955 (NFFQRGGNQG…RNVEYQNKAE (91 aa)) is disordered. Over residues 882–894 (YRNQNQNQNWNNN) the composition is skewed to low complexity. The segment covering 911-955 (GEGREQREHHRDHHRDQREHREHQNREFREQREQMRNVEYQNKAE) has biased composition (basic and acidic residues).

Belongs to the eIF-3 subunit C family. In terms of assembly, component of the eukaryotic translation initiation factor 3 (eIF-3) complex.

It is found in the cytoplasm. Functionally, component of the eukaryotic translation initiation factor 3 (eIF-3) complex, which is involved in protein synthesis of a specialized repertoire of mRNAs and, together with other initiation factors, stimulates binding of mRNA and methionyl-tRNAi to the 40S ribosome. The eIF-3 complex specifically targets and initiates translation of a subset of mRNAs involved in cell proliferation. This chain is Eukaryotic translation initiation factor 3 subunit C, found in Anopheles gambiae (African malaria mosquito).